The sequence spans 379 residues: Copper-containing nitrite reductase (379 aa).

A signal peptide (tat-type signal) is located at residues Met1–Ala32. Plastocyanin-like domains lie at Glu33 to Val214 and Tyr215 to Gly379. His134, His139, His174, Cys175, His184, Met189, and His345 together coordinate Cu cation.

Belongs to the multicopper oxidase family. Homotrimer. Cu(2+) is required as a cofactor. Cu(+) serves as cofactor. The cofactor is FAD. Predicted to be exported by the Tat system. The position of the signal peptide cleavage has not been experimentally proven.

It is found in the periplasm. It catalyses the reaction nitric oxide + Fe(III)-[cytochrome c] + H2O = Fe(II)-[cytochrome c] + nitrite + 2 H(+). Its pathway is nitrogen metabolism; nitrate reduction (denitrification); dinitrogen from nitrate: step 2/4. The polypeptide is Copper-containing nitrite reductase (nirU) (Neorhizobium galegae (Rhizobium galegae)).